Here is a 616-residue protein sequence, read N- to C-terminus: Probable Xaa-Pro aminopeptidase P (616 aa).

Mn(2+) contacts are provided by Asp413, Asp424, Glu522, and Glu536.

Belongs to the peptidase M24B family. It depends on Mn(2+) as a cofactor.

The catalysed reaction is Release of any N-terminal amino acid, including proline, that is linked to proline, even from a dipeptide or tripeptide.. Catalyzes the removal of a penultimate prolyl residue from the N-termini of peptides. This Paracoccidioides lutzii (strain ATCC MYA-826 / Pb01) (Paracoccidioides brasiliensis) protein is Probable Xaa-Pro aminopeptidase P (AMPP).